The chain runs to 432 residues: Asparagine--tRNA ligase (432 aa).

The protein belongs to the class-II aminoacyl-tRNA synthetase family. Homodimer.

It is found in the cytoplasm. It carries out the reaction tRNA(Asn) + L-asparagine + ATP = L-asparaginyl-tRNA(Asn) + AMP + diphosphate + H(+). This chain is Asparagine--tRNA ligase, found in Lactobacillus helveticus (strain DPC 4571).